Here is a 119-residue protein sequence, read N- to C-terminus: Ribonuclease P protein component (119 aa).

It belongs to the RnpA family. In terms of assembly, consists of a catalytic RNA component (M1 or rnpB) and a protein subunit.

The catalysed reaction is Endonucleolytic cleavage of RNA, removing 5'-extranucleotides from tRNA precursor.. Its function is as follows. RNaseP catalyzes the removal of the 5'-leader sequence from pre-tRNA to produce the mature 5'-terminus. It can also cleave other RNA substrates such as 4.5S RNA. The protein component plays an auxiliary but essential role in vivo by binding to the 5'-leader sequence and broadening the substrate specificity of the ribozyme. This chain is Ribonuclease P protein component, found in Halalkalibacterium halodurans (strain ATCC BAA-125 / DSM 18197 / FERM 7344 / JCM 9153 / C-125) (Bacillus halodurans).